Consider the following 332-residue polypeptide: Glycerol-3-phosphate dehydrogenase [NAD(P)+] (332 aa).

Residues Ser-11, Phe-12, Lys-32, and Lys-106 each contribute to the NADPH site. Residues Lys-106, Gly-137, and Ser-139 each coordinate sn-glycerol 3-phosphate. Ala-141 serves as a coordination point for NADPH. Sn-glycerol 3-phosphate-binding residues include Lys-192, Asp-245, Ser-255, Arg-256, and Asn-257. Residue Lys-192 is the Proton acceptor of the active site. Arg-256 contributes to the NADPH binding site. The NADPH site is built by Val-280 and Glu-282.

This sequence belongs to the NAD-dependent glycerol-3-phosphate dehydrogenase family.

The protein localises to the cytoplasm. The enzyme catalyses sn-glycerol 3-phosphate + NAD(+) = dihydroxyacetone phosphate + NADH + H(+). It catalyses the reaction sn-glycerol 3-phosphate + NADP(+) = dihydroxyacetone phosphate + NADPH + H(+). It functions in the pathway membrane lipid metabolism; glycerophospholipid metabolism. Its function is as follows. Catalyzes the reduction of the glycolytic intermediate dihydroxyacetone phosphate (DHAP) to sn-glycerol 3-phosphate (G3P), the key precursor for phospholipid synthesis. The polypeptide is Glycerol-3-phosphate dehydrogenase [NAD(P)+] (Staphylococcus aureus (strain bovine RF122 / ET3-1)).